The chain runs to 129 residues: MAAMTAAAAAPAMRLFNPSTFFQTLRTQRFGVPALNFAVPAAAISLLPSIPSLLEDIWEGILRAVPKKKTSHMKKRHRQMAGKALKDVTHLNRCPACGNLKRMHHLCSTCLGKLKGFMDRNGGSNAKAY.

The N-terminal 63 residues, 1 to 63 (MAAMTAAAAA…LEDIWEGILR (63 aa)), are a transit peptide targeting the mitochondrion. Zn(2+)-binding residues include cysteine 94, cysteine 97, cysteine 107, and cysteine 110.

Belongs to the bacterial ribosomal protein bL32 family. Component of the mitochondrial large ribosomal subunit (mt-LSU). Mature N.crassa 74S mitochondrial ribosomes consist of a small (37S) and a large (54S) subunit. The 37S small subunit contains a 16S ribosomal RNA (16S mt-rRNA) and 32 different proteins. The 54S large subunit contains a 23S rRNA (23S mt-rRNA) and 42 different proteins. bL32m has a zinc binding site. In terms of processing, MRPL32 precursor is processed by the m-AAA protease (composed of YTA12/RCA1 and YTA10/AFG3), which cleaves the N-terminal transit peptide. Cleavage by the m-AAA protease takes place prior to assembly into the large subunit, an essential step for mitochondrial ribosome (mitoribosome) assembly. Proper processing by the m-AAA protease is dependent on the zinc-binding region within the tightly folded C-terminal domain of MRPL32: zinc-dependent folding halts degradation initiated from the N-terminus and triggers the release of mature MRPL32.

The protein resides in the mitochondrion. In terms of biological role, component of the mitochondrial ribosome (mitoribosome), a dedicated translation machinery responsible for the synthesis of mitochondrial genome-encoded proteins, including at least some of the essential transmembrane subunits of the mitochondrial respiratory chain. The mitoribosomes are attached to the mitochondrial inner membrane and translation products are cotranslationally integrated into the membrane. This is Large ribosomal subunit protein bL32m (mrpl32) from Neurospora crassa (strain ATCC 24698 / 74-OR23-1A / CBS 708.71 / DSM 1257 / FGSC 987).